Reading from the N-terminus, the 382-residue chain is Dodecanoyl-[acyl-carrier-protein] hydrolase, chloroplastic (382 aa).

Residues 1 to 83 constitute a chloroplast transit peptide; the sequence is MATTSLASAF…FSAAEKQWTN (83 aa). Catalysis depends on residues Asn283, His285, and Cys320.

This sequence belongs to the acyl-ACP thioesterase family.

Its subcellular location is the plastid. The protein localises to the chloroplast. It catalyses the reaction dodecanoyl-[ACP] + H2O = dodecanoate + holo-[ACP] + H(+). Plays an essential role in chain termination during de novo fatty acid synthesis. High thioesterase activity for myristoyl-ACP. This is Dodecanoyl-[acyl-carrier-protein] hydrolase, chloroplastic from Cinnamomum camphora (Camphor tree).